The primary structure comprises 184 residues: Ribosome-recycling factor (184 aa).

The protein belongs to the RRF family.

The protein resides in the cytoplasm. Responsible for the release of ribosomes from messenger RNA at the termination of protein biosynthesis. May increase the efficiency of translation by recycling ribosomes from one round of translation to another. The sequence is that of Ribosome-recycling factor from Borrelia garinii subsp. bavariensis (strain ATCC BAA-2496 / DSM 23469 / PBi) (Borreliella bavariensis).